We begin with the raw amino-acid sequence, 304 residues long: NSITYNFENINSNVDNGNQSKNISDLSYTDQKEILEKIVSYIVDISLYDIENTALNAAEQLLSDNSVDEKTLKKRAQSLKKLSSIMERYAGGKRNDKKAKKYDTQDVVGYIMHGISTINKEMKNQNENVPEHVQHNAEANVEHDAEENVEHDAEENVEHDAEENAEENVEENVEEVEENVEENVEENVEENVEENVEENVEENVEEVEENVEENVEENVEENVEENVEENVEENVEENVEENVEENVEEYDEENVEEVEENVEENVEENVEENVEENVEENVEENVEENVEEYDEENVEEHNGI.

Residues Asn-18 and Asn-22 are each glycosylated (N-linked (GlcNAc...) asparagine). Basic and acidic residues predominate over residues 142-159 (EHDAEENVEHDAEENVEH). The tract at residues 142 to 304 (EHDAEENVEH…EENVEEHNGI (163 aa)) is disordered. The span at 160–298 (DAEENAEENV…NVEEYDEENV (139 aa)) shows a compositional bias: acidic residues.

Its subcellular location is the cell membrane. Its function is as follows. May disrupt the normal intermolecular interactions of the cytoplasmic domain of band 3 and thereby facilitate the invagination of the red cell membrane which is necessary for the formation of the parasitophorous vacuole. The chain is Ring-infected erythrocyte surface antigen (RESA) from Plasmodium falciparum (isolate Palo Alto / Uganda).